Consider the following 732-residue polypeptide: B-cadherin (732 aa).

The propeptide occupies Leu-1–Arg-6. 5 consecutive Cadherin domains span residues Arg-6–Phe-114, Thr-115–Phe-227, Asp-228–Phe-339, Asp-340–His-443, and Gly-444–Thr-554. The Extracellular portion of the chain corresponds to Arg-6–Thr-554. An N-linked (GlcNAc...) asparagine glycan is attached at Asn-137. The N-linked (GlcNAc...) asparagine glycan is linked to Asn-410. A helical transmembrane segment spans residues Gly-555–Val-580. Over Arg-581–Glu-732 the chain is Cytoplasmic.

In terms of tissue distribution, expressed in a wide variety of tissues.

It localises to the cell membrane. Functionally, cadherins are calcium-dependent cell adhesion proteins. They preferentially interact with themselves in a homophilic manner in connecting cells; cadherins may thus contribute to the sorting of heterogeneous cell types. B-cadherin may have important functions in neurogenesis, in at least some epithelia, and in embryogenesis. The protein is B-cadherin (K-CAM) of Gallus gallus (Chicken).